The chain runs to 350 residues: D-alanine--D-alanine ligase (350 aa).

The ATP-grasp domain occupies 135 to 335; the sequence is KLYAKNLGVK…LAQSLPKTPK (201 aa). 164-219 contributes to the ATP binding site; that stretch reads KPSFNFPFIVKPNNAGSSLGVSVVKEEKELAYALDGAFEYSKEVLIEPFIQRVKEY. Positions 291, 303, and 305 each coordinate Mg(2+).

This sequence belongs to the D-alanine--D-alanine ligase family. Requires Mg(2+) as cofactor. Mn(2+) is required as a cofactor.

The protein localises to the cytoplasm. It carries out the reaction 2 D-alanine + ATP = D-alanyl-D-alanine + ADP + phosphate + H(+). It participates in cell wall biogenesis; peptidoglycan biosynthesis. Cell wall formation. In Helicobacter acinonychis (strain Sheeba), this protein is D-alanine--D-alanine ligase.